The primary structure comprises 511 residues: GMP synthase [glutamine-hydrolyzing] (511 aa).

The Glutamine amidotransferase type-1 domain occupies 5–195; that stretch reads DILVLDFGSQ…AKYACNCESI (191 aa). The Nucleophile role is filled by Cys82. Catalysis depends on residues His169 and Glu171. The GMPS ATP-PPase domain occupies 196–386; that stretch reads WNMGSFAKTQ…LGLSKEVVYR (191 aa). 223–229 contributes to the ATP binding site; the sequence is SGGVDSS.

In terms of assembly, homodimer.

The enzyme catalyses XMP + L-glutamine + ATP + H2O = GMP + L-glutamate + AMP + diphosphate + 2 H(+). The protein operates within purine metabolism; GMP biosynthesis; GMP from XMP (L-Gln route): step 1/1. Functionally, catalyzes the synthesis of GMP from XMP. This chain is GMP synthase [glutamine-hydrolyzing] (guaA), found in Campylobacter jejuni subsp. jejuni serotype O:2 (strain ATCC 700819 / NCTC 11168).